The primary structure comprises 537 residues: MVTLPLLLSILPLAAVFSSAASLQVRENHDCASIQPPQVPGAEILSVIGVQRRVEVAPFPPSPSKPNTTIDICSVNVTLSHMGVNDKVVVSVWLPLPDKWNGRFQATGGGGWAAGTFDLLMGPAALEGYSTAGTDAGVTVDPGSADKWALKEDGTVNYDLLENFASRSIHDMAIVGKAVTESYYKKPANYSYFYGCSNGGRQGMVEAQKYPDDFDGILAGAPAIYWPQFLTSTEWPQVVMQSEKVFPSQCVFEAFRKAGIAACDKLDGVEDGVVSNLDGCEFNPFALVGKKVKCGEESTTITLAQAWVAKKIYDGPKSTAKHALWDVLPVGASYVGLANSTIENGVPKIAPFVIGSSWIRSFLKKDVNFDLSTITYADMPKLFQQSIDEFDKIAGGSNPDLSALKKSGTKLLSWHGLADELIHPQGSIKYRQAVEHRMGGGSEVDNYYRLFLAPGVTHCGIGVNDGAAPIDTLKVLVRWVEKGEAPETMPATATDASGTTTLFTRNLCRYPLVPRYKGGDKNSADSFECAKDFGSHH.

Residues 1-22 form the signal peptide; sequence MVTLPLLLSILPLAAVFSSAAS. Residues asparagine 67, asparagine 76, and asparagine 189 are each glycosylated (N-linked (GlcNAc...) asparagine). Intrachain disulfides connect cysteine 196–cysteine 459, cysteine 263–cysteine 280, and cysteine 508–cysteine 529. Serine 197 (acyl-ester intermediate) is an active-site residue. 5 residues coordinate Ca(2+): aspartate 264, aspartate 267, valine 269, aspartate 271, and valine 273. A glycan (N-linked (GlcNAc...) asparagine) is linked at asparagine 339. Catalysis depends on charge relay system residues aspartate 419 and histidine 458.

This sequence belongs to the tannase family.

It localises to the secreted. The enzyme catalyses feruloyl-polysaccharide + H2O = ferulate + polysaccharide.. Functionally, hydrolyzes the feruloyl-arabinose ester bond in arabinoxylans as well as the feruloyl-galactose and feruloyl-arabinose ester bonds. The sequence is that of Probable feruloyl esterase ARB_07085 from Arthroderma benhamiae (strain ATCC MYA-4681 / CBS 112371) (Trichophyton mentagrophytes).